A 710-amino-acid polypeptide reads, in one-letter code: MVKLAKAGKNQGDPKKMAPPPKEVEEDSEDEEMSEDEEDDSSGEEVVIPQKKGKKAAATSAKKVVVSPTKKVAVATPAKKAAVTPGKKAAATPAKKTVTPAKAVTTPGKKGATPGKALVATPGKKGAAIPAKGAKNGKNAKKEDSDEEEDDDSEEDEEDDEDEDEDEDEIEPAAMKAAAAAPASEDEDDEDDEDDEDDDDDEEDDSEEEAMETTPAKGKKAAKVVPVKAKNVAEDEDEEEDDEDEDDDDDEDDEDDDDEDDEEEEEEEEEEPVKEAPGKRKKEMAKQKAAPEAKKQKVEGTEPTTAFNLFVGNLNFNKSAPELKTGISDVFAKNDLAVVDVRIGMTRKFGYVDFESAEDLEKALELTGLKVFGNEIKLEKPKGKDSKKERDARTLLAKNLPYKVTQDELKEVFEDAAEIRLVSKDGKSKGIAYIEFKTEADAEKTFEEKQGTEIDGRSISLYYTGEKGQNQDYRGGKNSTWSGESKTLVLSNLSYSATEETLQEVFEKATFIKVPQNQNGKSKGYAFIEFASFEDAKEALNSCNKREIEGRAIRLELQGPRGSPNARSQPSKTLFVKGLSEDTTEETLKESFDGSVRARIVTDRETGSSKGFGFVDFNSEEDAKAAKEAMEDGEIDGNKVTLDWAKPKGEGGFGGRGGGRGGFGGRGGGRGGRGGFGGRGRGGFGGRGGFRGGRGGGGDHKPQGKKTKFE.

Positions 1–303 (MVKLAKAGKN…KKQKVEGTEP (303 aa)) are disordered. N6-acetyllysine occurs at positions 9, 15, and 16. The span at 24–43 (VEEDSEDEEMSEDEEDDSSG) shows a compositional bias: acidic residues. 4 positions are modified to phosphoserine: S28, S34, S41, and S42. Positions 56–107 (AAATSAKKVVVSPTKKVAVATPAKKAAVTPGKKAAATPAKKTVTPAKAVTTP) are enriched in low complexity. Repeat unit 1 spans residues 58 to 65 (ATSAKKVV). Residues 58 to 135 (ATSAKKVVVS…GAAIPAKGAK (78 aa)) form an 8 X 8 AA tandem repeats of X-T-P-X-K-K-X-X region. The residue at position 67 (S67) is a Phosphoserine. Phosphothreonine is present on residues T69, T76, T84, and T92. Repeat copies occupy residues 75-82 (ATPAKKAA), 83-90 (VTPGKKAA), and 91-98 (ATPAKKTV). The residue at position 96 (K96) is an N6-acetyllysine. Residue T99 is modified to Phosphothreonine. The 5; truncated repeat unit spans residues 99 to 104 (TPAKAV). Residue K102 is modified to N6-acetyllysine. Repeat 6 spans residues 105–112 (TTPGKKGA). Residue T106 is modified to Phosphothreonine. K109 is subject to N6-acetyllysine. T113 carries the post-translational modification Phosphothreonine. K116 carries the N6-acetyllysine modification. 2 tandem repeats follow at residues 120–127 (ATPGKKGA) and 128–135 (AIPAKGAK). T121 is subject to Phosphothreonine. Residues 122–137 (PGKKGAAIPAKGAKNG) are compositionally biased toward low complexity. Position 124 is an N6-acetyllysine (K124). Phosphoserine is present on residues S145 and S153. Acidic residues predominate over residues 145–171 (SDEEEDDDSEEDEEDDEDEDEDEDEIE). Residues 172–183 (PAAMKAAAAAPA) show a composition bias toward low complexity. S184 and S206 each carry phosphoserine. The span at 184-211 (SEDEDDEDDEDDEDDDDDEEDDSEEEAM) shows a compositional bias: acidic residues. T214 carries the post-translational modification Phosphothreonine. A compositionally biased stretch (acidic residues) spans 234–272 (EDEDEEEDDEDEDDDDDEDDEDDDDEDDEEEEEEEEEEP). The span at 273–300 (VKEAPGKRKKEMAKQKAAPEAKKQKVEG) shows a compositional bias: basic and acidic residues. K297 participates in a covalent cross-link: Glycyl lysine isopeptide (Lys-Gly) (interchain with G-Cter in SUMO1); alternate. Residue K297 forms a Glycyl lysine isopeptide (Lys-Gly) (interchain with G-Cter in SUMO2); alternate linkage. T301 is modified (phosphothreonine). RRM domains follow at residues 307-383 (FNLF…KPKG) and 393-466 (RTLL…YTGE). K318 is subject to N6-acetyllysine. Residue K324 forms a Glycyl lysine isopeptide (Lys-Gly) (interchain with G-Cter in SUMO1); alternate linkage. K324 participates in a covalent cross-link: Glycyl lysine isopeptide (Lys-Gly) (interchain with G-Cter in SUMO2); alternate. N6-acetyllysine is present on K348. Position 356 is a phosphoserine (S356). A Phosphothreonine modification is found at T367. A Glycyl lysine isopeptide (Lys-Gly) (interchain with G-Cter in SUMO2) cross-link involves residue K370. Residue K377 forms a Glycyl lysine isopeptide (Lys-Gly) (interchain with G-Cter in SUMO2); alternate linkage. K377 carries the post-translational modification N6-acetyllysine; alternate. N6-acetyllysine occurs at positions 398 and 403. Position 405 is a phosphothreonine (T405). Residues K427 and K444 each carry the N6-acetyllysine modification. Phosphoserine is present on residues S458 and S460. Residues K467 and K477 each carry the N6-acetyllysine modification. Positions 486 to 560 (KTLVLSNLSY…RAIRLELQGP (75 aa)) constitute an RRM 3 domain. K513 participates in a covalent cross-link: Glycyl lysine isopeptide (Lys-Gly) (interchain with G-Cter in SUMO2); alternate. At K513 the chain carries N6-acetyllysine; alternate. K521 carries the N6-acetyllysine modification. A Phosphoserine modification is found at S563. An N6-acetyllysine modification is found at K572. One can recognise an RRM 4 domain in the interval 572-647 (KTLFVKGLSE…NKVTLDWAKP (76 aa)). K577 participates in a covalent cross-link: Glycyl lysine isopeptide (Lys-Gly) (interchain with G-Cter in SUMO2); alternate. K577 carries the N6-acetyllysine; alternate modification. Position 580 is a phosphoserine (S580). Residue K589 forms a Glycyl lysine isopeptide (Lys-Gly) (interchain with G-Cter in SUMO1); alternate linkage. A Glycyl lysine isopeptide (Lys-Gly) (interchain with G-Cter in SUMO2); alternate cross-link involves residue K589. Residues S591 and S619 each carry the phosphoserine modification. A Glycyl lysine isopeptide (Lys-Gly) (interchain with G-Cter in SUMO2) cross-link involves residue K624. A disordered region spans residues 640–710 (VTLDWAKPKG…KPQGKKTKFE (71 aa)). N6-acetyllysine is present on K646. A compositionally biased stretch (gly residues) spans 650–696 (EGGFGGRGGGRGGFGGRGGGRGGRGGFGGRGRGGFGGRGGFRGGRGG). R656, R660, R666, R670, R673, R679, R681, R687, and R691 each carry asymmetric dimethylarginine. R694 carries the asymmetric dimethylarginine; alternate modification. R694 carries the post-translational modification Omega-N-methylarginine; alternate. The span at 697 to 710 (GGDHKPQGKKTKFE) shows a compositional bias: basic and acidic residues.

As to quaternary structure, identified in a IGF2BP1-dependent mRNP granule complex containing untranslated mRNAs. Component of the SWAP complex that consists of NPM1, NCL/nucleolin, PARP1 and SWAP70. Component of a complex which is at least composed of HTATSF1/Tat-SF1, the P-TEFb complex components CDK9 and CCNT1, RNA polymerase II, SUPT5H, and NCL/nucleolin. Interacts with AICDA. Interacts with APTX. Interacts with C1QBP. Interacts with ERBB4. Interacts (via C-terminus) with FMR1 isoform 6 (via N-terminus). Interacts with GZF1; this interaction is important for nucleolar localization of GZF1. Interacts with NSUN2. Interacts with NVL. Interacts (via N-terminus domain) with SETX. Interacts (via RRM1 and C-terminal RRM4/Arg/Gly-rich domains) with TERT; the interaction is important for nucleolar localization of TERT. Interacts with WDR46. Interacts with ZFP36. Interacts with LRRC34. Interacts with RRP1B. Interacts with HNRNPU; this interaction occurs during mitosis. Interacts with RIOK1; RIOK1 recruits NCL to PRMT5 for symmetrically methylation. Interacts with ZBTB7B. Interacts with MDK; this interaction promotes NCL clustering and lateral movements of this complex into lipid rafts leading to MDK internalization. Interacts with HDGF (isoform 1). Interacts with ALKBH2. Interacts with IGFBP5; this interaction is necessary for IGFBP5 localization to the nucleus. Interacts with DDX24 (when ubiquitinated); this interaction may be important during ribosome biogenesis. In terms of processing, some glutamate residues are glycylated by TTLL8. This modification occurs exclusively on glutamate residues and results in a glycine chain on the gamma-carboxyl group. Symmetrically methylated by PRMT5.

It localises to the nucleus. Its subcellular location is the nucleolus. The protein localises to the cytoplasm. Nucleolin is the major nucleolar protein of growing eukaryotic cells. It is found associated with intranucleolar chromatin and pre-ribosomal particles. It induces chromatin decondensation by binding to histone H1. It is thought to play a role in pre-rRNA transcription and ribosome assembly. May play a role in the process of transcriptional elongation. Binds RNA oligonucleotides with 5'-UUAGGG-3' repeats more tightly than the telomeric single-stranded DNA 5'-TTAGGG-3' repeats. The polypeptide is Nucleolin (NCL) (Homo sapiens (Human)).